Here is a 359-residue protein sequence, read N- to C-terminus: Type-1 angiotensin II receptor B (359 aa).

At 1-25 (MTLNSSTEDGIKRIQDDCPKAGRHN) the chain is on the extracellular side. An N-linked (GlcNAc...) asparagine glycan is attached at asparagine 4. Glutamine 15 and aspartate 17 together coordinate angiotensin II. Cystine bridges form between cysteine 18–cysteine 274 and cysteine 101–cysteine 180. The helical transmembrane segment at 26–55 (YIFVMIPTLYSIIFVVGIFGNSLVVIVIYF) threads the bilayer. Residues 56 to 61 (YMKLKT) are Cytoplasmic-facing. Residues 62 to 89 (VASVFLLNLALADLCFLLTLPLWAVYTA) form a helical membrane-spanning segment. The Extracellular segment spans residues 90 to 98 (MEYRWPFGN). The chain crosses the membrane as a helical span at residues 99–125 (HLCKIASASVSFNLYASVFLLTCLSID). At 126 to 141 (RYLAIVHPMKSRLRRT) the chain is on the cytoplasmic side. Residues 142–165 (MLVAKVTCIIIWLMAGLASLPAVI) traverse the membrane as a helical segment. Topologically, residues 166 to 190 (YRNVYFIENTNITVCAFHYESQNST) are extracellular. Residue arginine 167 coordinates angiotensin II. An N-linked (GlcNAc...) asparagine glycan is attached at asparagine 176. Residues phenylalanine 182, histidine 183, and tyrosine 184 each contribute to the angiotensin II site. The N-linked (GlcNAc...) asparagine glycan is linked to asparagine 188. Residues 191–216 (LPIGLGLTKNILGFVFPFLIILTSYT) traverse the membrane as a helical segment. Angiotensin II is bound at residue lysine 199. Over 217–239 (LIWKALKKAYKIQKNTPRNDDIF) the chain is Cytoplasmic. Residues 240–268 (RIIMAIVLFFFFSWVPHQIFTFLDVLIQL) form a helical membrane-spanning segment. The Extracellular segment spans residues 269–278 (GIIRDCEIAD). A helical transmembrane segment spans residues 279-304 (IVDTAMPITICIAYFNNCLNPLFYGF). Residues 305 to 359 (LGKKFKKYFLQLLKYIPPTAKSHAGLSTKMSTLSYRPSDNMSSSAKKSASFFEVE) are Cytoplasmic-facing. The interval 339 to 359 (YRPSDNMSSSAKKSASFFEVE) is disordered. Low complexity predominate over residues 346–359 (SSSAKKSASFFEVE).

It belongs to the G-protein coupled receptor 1 family. Interacts with MAS1. Interacts with ARRB1. Interacts with FLNA (via filamin repeat 21); increases PKA-mediated phosphorylation of FLNA. Post-translationally, C-terminal Ser or Thr residues may be phosphorylated. Is expressed in the liver, kidney, aorta, lung, uterus, ovary, spleen, heart, and vascular smooth muscle cell. Expressed most abundantly in the adrenal gland.

The protein localises to the cell membrane. Functionally, receptor for angiotensin II, a vasoconstricting peptide, which acts as a key regulator of blood pressure and sodium retention by the kidney. The activated receptor in turn couples to G-alpha proteins G(q) (GNAQ, GNA11, GNA14 or GNA15) and thus activates phospholipase C and increases the cytosolic Ca(2+) concentrations, which in turn triggers cellular responses such as stimulation of protein kinase C. The polypeptide is Type-1 angiotensin II receptor B (Agtr1b) (Rattus norvegicus (Rat)).